A 551-amino-acid polypeptide reads, in one-letter code: Gliomedin (551 aa).

The Cytoplasmic segment spans residues 1-17 (MARGAEGGRGDAGWGLR). Residues 18-39 (GALAAVALLSALNAAGTVFALC) traverse the membrane as a helical; Signal-anchor for type II membrane protein segment. The Extracellular segment spans residues 40 to 551 (QWRGLSSALR…VQFLSTTLNQ (512 aa)). The disordered stretch occupies residues 72 to 107 (LSRAPRGASAPPQDPASSARNKRSHSGEPAPHIRAE). Low complexity predominate over residues 79–90 (ASAPPQDPASSA). Asparagine 130 carries an N-linked (GlcNAc...) asparagine glycan. Collagen-like domains follow at residues 137–195 (LTGP…RGEK) and 196–222 (GDHGELGLQGNEGPPGQKGEKGDKGDV). The interval 139–282 (GPSGPPGPPG…GETCAIPNDD (144 aa)) is disordered. Basic and acidic residues-rich tracts occupy residues 191–200 (ERGEKGDHGE) and 213–222 (KGEKGDKGDV). The span at 237 to 253 (PPGPPGPPGPPGPPGPP) shows a compositional bias: pro residues. Residues 299-546 (QAESMITSIG…LMLYPVQFLS (248 aa)) form the Olfactomedin-like domain. Residues asparagine 329, asparagine 357, asparagine 378, and asparagine 464 are each glycosylated (N-linked (GlcNAc...) asparagine).

Homotrimer (via collagen-like domains). Interacts with NRCAM and NFASC/neurofascin. Interaction with glial NRCAM enhances interaction with axonal NFASC. Interacts with MYOC. In terms of processing, N-glycosylated. Post-translationally, proteolytic processing by a furin-like protease causes shedding of the ectodomain. Further cleavage by BMP1 releases the olfactomedin-like domain. As to expression, specifically expressed in spinal cord, brain, placenta and sciatic nerve. More abundant in peripheral than central nervous system.

The protein localises to the cell membrane. It localises to the cell projection. It is found in the axon. The protein resides in the secreted. Its subcellular location is the extracellular space. The protein localises to the extracellular matrix. Functionally, ligand for NRCAM and NFASC/neurofascin that plays a role in the formation and maintenance of the nodes of Ranvier on myelinated axons. Mediates interaction between Schwann cell microvilli and axons via its interactions with NRCAM and NFASC. Nodes of Ranvier contain clustered sodium channels that are crucial for the saltatory propagation of action potentials along myelinated axons. During development, nodes of Ranvier are formed by the fusion of two heminodes. Required for normal clustering of sodium channels at heminodes; not required for the formation of mature nodes with normal sodium channel clusters. Required, together with NRCAM, for maintaining NFASC and sodium channel clusters at mature nodes of Ranvier. In Homo sapiens (Human), this protein is Gliomedin (GLDN).